We begin with the raw amino-acid sequence, 570 residues long: Glycine--tRNA ligase (570 aa).

The substrate site is built by R99 and E165. ATP contacts are provided by residues 197–199 (RNE), 207–212 (LRLREF), 324–325 (EC), and 443–446 (GIDR). Residue 212-216 (FSQAE) coordinates substrate. Substrate is bound at residue 439–443 (EPSFG).

Belongs to the class-II aminoacyl-tRNA synthetase family.

The protein resides in the cytoplasm. The enzyme catalyses tRNA(Gly) + glycine + ATP = glycyl-tRNA(Gly) + AMP + diphosphate. Functionally, catalyzes the attachment of glycine to tRNA(Gly). This chain is Glycine--tRNA ligase, found in Thermococcus sibiricus (strain DSM 12597 / MM 739).